The sequence spans 61 residues: Lens epithelial cell protein LEP503 (61 aa).

This chain is Lens epithelial cell protein LEP503 (Lenep), found in Mus musculus (Mouse).